The chain runs to 103 residues: Integration host factor subunit beta (103 aa).

A disordered region spans residues 62 to 81 (RNPKTGESVALPGKHVPHFK).

This sequence belongs to the bacterial histone-like protein family. In terms of assembly, heterodimer of an alpha and a beta chain.

This protein is one of the two subunits of integration host factor, a specific DNA-binding protein that functions in genetic recombination as well as in transcriptional and translational control. This Xanthomonas campestris pv. campestris (strain B100) protein is Integration host factor subunit beta.